Consider the following 483-residue polypeptide: UDP-glycosyltransferase 85C1 (483 aa).

Residues serine 304, 360–361 (WC), 378–386 (HCGWGSIIE), and 400–403 (IGDQ) contribute to the UDP-alpha-D-glucose site.

This sequence belongs to the UDP-glycosyltransferase family.

In terms of biological role, may glycosylate diterpenes or flavonols in leaves. This is UDP-glycosyltransferase 85C1 from Stevia rebaudiana (Stevia).